A 309-amino-acid polypeptide reads, in one-letter code: Serine/threonine-protein phosphatase CPPED1 (309 aa).

The tract at residues 47 to 250 (WRIGDCDSGG…FSGHYHRNAG (204 aa)) is catalytic. Residues Asp-51, Asp-88, Asn-125, and His-244 each coordinate a divalent metal cation.

The protein belongs to the metallophosphoesterase superfamily. CPPED1 family. The cofactor is a divalent metal cation.

The protein localises to the cytoplasm. The catalysed reaction is O-phospho-L-seryl-[protein] + H2O = L-seryl-[protein] + phosphate. The enzyme catalyses O-phospho-L-threonyl-[protein] + H2O = L-threonyl-[protein] + phosphate. Functionally, protein phosphatase involved in the dephosphorylation of AKT kinase family. This chain is Serine/threonine-protein phosphatase CPPED1 (cpped1), found in Danio rerio (Zebrafish).